The chain runs to 320 residues: (+)-corvol ether B synthase/(+)-corvol ether A synthase ((2E,6E)-farnesyl diphosphate cyclizing) (320 aa).

Positions 78 and 83 each coordinate Mg(2+). Residues Asp-78 to Asp-83 carry the DDXXXD motif motif. Residue Arg-171 coordinates substrate. Mg(2+)-binding residues include Asn-217, Ser-221, and Glu-225.

The protein belongs to the terpene synthase family. Mg(2+) is required as a cofactor.

The enzyme catalyses (2E,6E)-farnesyl diphosphate + H2O = (+)-corvol ether B + diphosphate. It carries out the reaction (2E,6E)-farnesyl diphosphate + H2O = (+)-corvol ether A + diphosphate. It participates in secondary metabolite biosynthesis; terpenoid biosynthesis. Functionally, catalyzes the conversion of (2E,6E)-farnesyl diphosphate (FPP) into (+)-corvol ether A and (+)-corvol ether B via a 1,10-cyclization, which requires isomerization of FPP to nerolidyl diphosphate (NPP) and then abstraction of the pyrophosphate from intermediate NPP leading to a (E,Z)-germacradienyl (helminthogermacradienyl) cation. The preferred substrate is (2E,6E)-farnesyl diphosphate (FPP), however geranyl diphosphate (GPP) is also able to produce small amounts of several acyclic and cyclic monoterpenes, with linalool as the main product. This is (+)-corvol ether B synthase/(+)-corvol ether A synthase ((2E,6E)-farnesyl diphosphate cyclizing) from Kitasatospora setae (strain ATCC 33774 / DSM 43861 / JCM 3304 / KCC A-0304 / NBRC 14216 / KM-6054) (Streptomyces setae).